The primary structure comprises 345 residues: Protein PXR1 (345 aa).

2 disordered regions span residues 1–25 and 166–317; these read MGLA…SNNN and VEDE…ASRL. The G-patch domain maps to 25–71; it reads NNQFGHQYLTKMGWTPGKGIGLVPDSITTHLKINIKTDNAGLGAKLQ. The segment covering 187–227 has biased composition (basic residues); the sequence is KKEKKEKKEKKEKKEKKEKKEKKEKKEKKEKKEKKEKKEKK. Residues 228-237 show a composition bias toward basic and acidic residues; sequence EKKEKSDKKE. Basic residues predominate over residues 238 to 278; it reads KKEKKDKKEKKEKKEKKEKKEKKEKKEKKEKKEKKEKKEKK. The span at 279-288 shows a compositional bias: basic and acidic residues; that stretch reads EKKDKLDKES. The span at 289–312 shows a compositional bias: polar residues; sequence SNAANVESTKSLVSDSSRESTPTP.

The protein belongs to the PINX1 family.

It is found in the nucleus. Its subcellular location is the nucleolus. Its function is as follows. Involved in rRNA-processing at A0, A1 and A2 sites and negatively regulates telomerase. The polypeptide is Protein PXR1 (PXR1) (Lodderomyces elongisporus (strain ATCC 11503 / CBS 2605 / JCM 1781 / NBRC 1676 / NRRL YB-4239) (Yeast)).